The following is a 195-amino-acid chain: SAGA-associated factor 11 homolog (195 aa).

The tract at residues 1 to 22 is disordered; it reads MSAANMPTTTGAQGSGNQVPRT. An SGF11-type zinc finger spans residues 105–126; sequence CTCPNCDRLVAAARFAPHLEKC. Residues 140-195 are disordered; sequence RLATKEGATSAHLHSSGNTGGTDDEDDVDWSSDKRRKKSNQNSRNNGSKKNNGKTF. S171 carries the post-translational modification Phosphoserine. Residues 179–195 are compositionally biased toward low complexity; the sequence is NQNSRNNGSKKNNGKTF.

The protein belongs to the SGF11 family. Component of some SAGA transcription coactivator-HAT complexes, at least composed of Ada2b, not/nonstop, Pcaf/Gcn5, Sgf11 and Spt3. Within the SAGA complex, Sgf11, e(y)2, and not/nonstop form an additional subcomplex of SAGA called the DUB module (deubiquitination module). Interacts directly with not/nonstop. Interacts with the AMEX complex component xmas-2. Interacts with Cbp80; important for promoter recruitment of Sgf11 that is not associated with the DUB module.

Its subcellular location is the nucleus. It localises to the nucleoplasm. It is found in the cytoplasm. In terms of biological role, component of the transcription regulatory histone acetylation (HAT) complex SAGA, a multiprotein complex that activates transcription by remodeling chromatin and mediating histone acetylation and deubiquitination. Within the SAGA complex, participates in a subcomplex that specifically deubiquitinates histone H2B. The SAGA complex is recruited to specific gene promoters by activators, where it is required for transcription. Required for nuclear receptor-mediated transactivation. Binds independently on SAGA to promoters in an RNA-dependent manner. Binds to mRNA and is essential for total mRNA export from the nucleus. Required to counteract heterochromatin silencing. Controls the development of neuronal connectivity in visual system by being required for accurate axon targeting in the optic lobe. Required for expression of ecdysone-induced genes such as br/broad. The polypeptide is SAGA-associated factor 11 homolog (Drosophila sechellia (Fruit fly)).